We begin with the raw amino-acid sequence, 765 residues long: LPS-assembly protein LptD (765 aa).

The N-terminal stretch at 1–18 (MQIRYFLALSLLPQVVLA) is a signal peptide.

The protein belongs to the LptD family. As to quaternary structure, component of the lipopolysaccharide transport and assembly complex. Interacts with LptE and LptA.

It localises to the cell outer membrane. Together with LptE, is involved in the assembly of lipopolysaccharide (LPS) at the surface of the outer membrane. This Shewanella sp. (strain ANA-3) protein is LPS-assembly protein LptD.